We begin with the raw amino-acid sequence, 266 residues long: Tryptophan synthase alpha chain (266 aa).

Active-site proton acceptor residues include Glu51 and Asp62.

This sequence belongs to the TrpA family. Tetramer of two alpha and two beta chains.

The catalysed reaction is (1S,2R)-1-C-(indol-3-yl)glycerol 3-phosphate + L-serine = D-glyceraldehyde 3-phosphate + L-tryptophan + H2O. The protein operates within amino-acid biosynthesis; L-tryptophan biosynthesis; L-tryptophan from chorismate: step 5/5. In terms of biological role, the alpha subunit is responsible for the aldol cleavage of indoleglycerol phosphate to indole and glyceraldehyde 3-phosphate. The protein is Tryptophan synthase alpha chain of Prochlorococcus marinus (strain NATL1A).